The following is a 329-amino-acid chain: L-arabinose-binding periplasmic protein (329 aa).

An N-terminal signal peptide occupies residues 1–23; that stretch reads MHKFTKALAAIGLAAVMSQSAMA.

Belongs to the bacterial solute-binding protein 2 family.

The protein resides in the periplasm. Involved in the high-affinity L-arabinose membrane transport system. Binds with high affinity to arabinose, but can also bind D-galactose (approximately 2-fold reduction) and D-fucose (approximately 40-fold reduction). The polypeptide is L-arabinose-binding periplasmic protein (araF) (Escherichia coli (strain K12)).